Consider the following 746-residue polypeptide: Polyribonucleotide nucleotidyltransferase (746 aa).

Mg(2+) is bound by residues D493 and D499. The region spanning 560–619 is the KH domain; sequence PRIITLQINPEKIGALIGPGGKTIRSITEATGAQIDIEEDGRVYISTADAAAAQQAVAMV. The 70-residue stretch at 629–698 folds into the S1 motif domain; sequence GDIFLGKVVR…GTGKVSLSRR (70 aa). Residues 704-746 are disordered; sequence ETAEDRRAAGAGRGLRDGGRSSGSERSGDRSPRSDDRPRPRRR. 2 stretches are compositionally biased toward basic and acidic residues: residues 706–722 and 729–746; these read AEDR…RDGG and RSGD…PRRR.

This sequence belongs to the polyribonucleotide nucleotidyltransferase family. Requires Mg(2+) as cofactor.

The protein resides in the cytoplasm. The enzyme catalyses RNA(n+1) + phosphate = RNA(n) + a ribonucleoside 5'-diphosphate. Involved in mRNA degradation. Catalyzes the phosphorolysis of single-stranded polyribonucleotides processively in the 3'- to 5'-direction. In Roseiflexus castenholzii (strain DSM 13941 / HLO8), this protein is Polyribonucleotide nucleotidyltransferase.